The sequence spans 836 residues: Taste receptor type 1 member 2 (836 aa).

The signal sequence occupies residues 1-19; sequence MGPRAKAVCSLFILLQVLA. The Extracellular portion of the chain corresponds to 20-565; it reads EPAENSDFYL…AFLEWHEPST (546 aa). Residues asparagine 84, asparagine 292, asparagine 312, asparagine 351, asparagine 427, asparagine 479, asparagine 486, asparagine 526, and asparagine 546 are each glycosylated (N-linked (GlcNAc...) asparagine). A helical membrane pass occupies residues 566-586; the sequence is IFVVMLTILGFLSTLAIMVIF. Over 587–601 the chain is Cytoplasmic; sequence WRHLHTPVVRSAGGP. The chain crosses the membrane as a helical span at residues 602-622; sequence MCFLMLVPLLLAYAMVPMYIG. Residues 623–634 are Extracellular-facing; it reads QPTFFSCLWRQT. A helical transmembrane segment spans residues 635–655; sequence FFTLCFTICISCITVRSFQIV. The Cytoplasmic segment spans residues 656 to 680; it reads CIFKMARRLPRAYGYWVRCHGPYVF. A helical membrane pass occupies residues 681 to 701; it reads VASFMVLKVVIVAGNVLATTA. At 702-724 the chain is on the extracellular side; the sequence is NPTARPDPDDPNIMVLSCNYRRA. A helical membrane pass occupies residues 725–745; that stretch reads LLFNTSLDLLLSVAGFSFAYM. At 746 to 757 the chain is on the cytoplasmic side; that stretch reads GKELPTNYNEAK. The chain crosses the membrane as a helical span at residues 758-778; the sequence is FITLCMTFYFTSSVSLCTFMS. Residues 779–781 lie on the Extracellular side of the membrane; the sequence is VYD. A helical membrane pass occupies residues 782 to 802; it reads GVLVTILDLLITVLNLLGISF. Over 803–836 the chain is Cytoplasmic; sequence GYFGPKCYMVLFYPERNTQVYFSSMIQGYTMGKD.

This sequence belongs to the G-protein coupled receptor 3 family. TAS1R subfamily. Forms heterodimers with TAS1R3.

It localises to the cell membrane. In terms of biological role, putative taste receptor. TAS1R2/TAS1R3 recognizes diverse natural and synthetic sweeteners. This is Taste receptor type 1 member 2 (TAS1R2) from Canis lupus familiaris (Dog).